Consider the following 156-residue polypeptide: Small ribosomal subunit protein bS18c (156 aa).

The segment at 1–54 (MYTSKQPFLKSKQPFRKSKQPFRKSKQPFRKFKKPFRKSKQPFRRRPRIGPGDR) is disordered. A compositionally biased stretch (basic residues) spans 13–48 (QPFRKSKQPFRKSKQPFRKFKKPFRKSKQPFRRRPR).

It belongs to the bacterial ribosomal protein bS18 family. In terms of assembly, part of the 30S ribosomal subunit.

Its subcellular location is the plastid. It localises to the chloroplast. This chain is Small ribosomal subunit protein bS18c, found in Lolium perenne (Perennial ryegrass).